Consider the following 294-residue polypeptide: Bidirectional sugar transporter SWEET13 (294 aa).

The Extracellular segment spans residues 1 to 7; it reads MALTNNL. The helical transmembrane segment at 8–28 threads the bilayer; sequence WAFVFGILGNIISFVVFLAPV. The region spanning 10 to 97 is the MtN3/slv 1 domain; sequence FVFGILGNII…VLFVSYANKK (88 aa). Residues 29–42 are Cytoplasmic-facing; sequence PTFVRICKKKSTEG. The helical transmembrane segment at 43–63 threads the bilayer; the sequence is FQSLPYVSALFSAMLWIYYAM. At 64–69 the chain is on the extracellular side; it reads QKDGTA. Residues 70–90 traverse the membrane as a helical segment; the sequence is FLLITINAFGCVIETIYIVLF. Over 91–104 the chain is Cytoplasmic; that stretch reads VSYANKKTRISTLK. The chain crosses the membrane as a helical span at residues 105 to 125; sequence VLGLLNFLGFAAIVLVCELLT. Residues 126–132 are Extracellular-facing; that stretch reads KGSTREK. The helical transmembrane segment at 133-153 threads the bilayer; the sequence is VLGGICVGFSVSVFAAPLSIM. The 84-residue stretch at 133–216 folds into the MtN3/slv 2 domain; the sequence is VLGGICVGFS…MILYIIFKYY (84 aa). Over 154-166 the chain is Cytoplasmic; it reads RVVVRTRSVEFMP. A helical transmembrane segment spans residues 167 to 187; sequence FSLSLFLTISAVTWLFYGLAI. Topologically, residues 188–192 are extracellular; sequence KDFYV. A helical transmembrane segment spans residues 193-213; the sequence is ALPNVLGAFLGAVQMILYIIF. Over 214–294 the chain is Cytoplasmic; that stretch reads KYYKTPVAQK…NKDVQKQSQV (81 aa). The tract at residues 273 to 294 is disordered; the sequence is KSQNMTDPKDQINKDVQKQSQV. A compositionally biased stretch (basic and acidic residues) spans 279-294; sequence DPKDQINKDVQKQSQV.

This sequence belongs to the SWEET sugar transporter family. As to quaternary structure, forms heterooligomers with SWEET1, SWEET3, SWEET6, SWEET7, SWEET8, SWEET9, SWEET11 and SWEET17. In terms of tissue distribution, expressed at low levels in leaves.

The protein localises to the cell membrane. Functionally, mediates both low-affinity uptake and efflux of sugar across the plasma membrane. Involved in nurturing the male gametophyte. The chain is Bidirectional sugar transporter SWEET13 from Arabidopsis thaliana (Mouse-ear cress).